Consider the following 422-residue polypeptide: MAIKPRTKGKTYSSRSVGSQWFNRLGFKQNKYGTCKFLSIITAFVFILYFFSNRFYPISRSAGASYSPSHGLYINEIPASSRLIYPHVEHVPVLKQMTVRGLYITRLEVDGSKRLILKPEENALTDEEKKKTTDQILLVKHSFLDHGKLVYRKSNDAPEVVVVTLIDFENYELETIIQIVQNRVDYAQKHQYGVYIRWIQEFLPVLENQNLAESYEFIKPLVIRAAMHAFPTAKYIHFVDQDALLMNLDLSLQKYLLDPKIMDLALLKNVPVVANSNIKTYNHFEYSSAKIIIPHDADGNIDASSFVIANDFYGKALIDYLNDPLLRNFPWDNTGDKLSAAIGHILQWHPTLLGKTAIVIPKVLASQYDASLDQEGESGNGASNGDVYHYNEGDLAASFKGCRSRGTCASEIGHMYQKIKKS.

Topologically, residues methionine 1–lysine 31 are cytoplasmic. A helical; Signal-anchor for type II membrane protein membrane pass occupies residues tyrosine 32–serine 52. Topologically, residues asparagine 53 to serine 422 are lumenal.

This sequence belongs to the glycosyltransferase 34 family. In terms of assembly, component of the M-Pol II complex composed of ANP1, MNN9, MNN10, MNN11 and HOC1.

It is found in the golgi apparatus. The protein localises to the cis-Golgi network membrane. Functionally, required for synthesis of full-length mannan chains. In terms of biological role, the M-Pol II complex possesses alpha-1,6-mannosyltransferase activity and is probably involved in the elongation of the mannan backbone of N-linked glycans on cell wall and periplasmic proteins. This Saccharomyces cerevisiae (strain ATCC 204508 / S288c) (Baker's yeast) protein is Probable alpha-1,6-mannosyltransferase MNN11 (MNN11).